Reading from the N-terminus, the 1437-residue chain is Myomesin-3 (1437 aa).

The tract at residues 1-49 (MTLPHSLGGAGDPRPPQAMEVHRLEHRQEEEQKEERQHSLRMGSSVRRR) is disordered. The span at 20–38 (EVHRLEHRQEEEQKEERQH) shows a compositional bias: basic and acidic residues. The stretch at 120 to 149 (RLLRQRRDWKTLRRRTEEKVQEAKELRELC) forms a coiled coil. 2 consecutive Ig-like C2-type domains span residues 154–246 (PWFW…AKVL) and 269–361 (PSVE…TYVL). 5 Fibronectin type-III domains span residues 375 to 469 (SPLN…VMGD), 503 to 598 (PPTN…LRGP), 604 to 696 (PPAQ…VKQA), 702 to 797 (APYG…CKEW), and 804 to 899 (PPYD…LEDK). Ig-like C2-type domains follow at residues 1120 to 1205 (PYFE…LDLT) and 1334 to 1423 (AKVV…VTIS).

In terms of assembly, homodimer.

It is found in the cytoplasm. It localises to the myofibril. The protein localises to the sarcomere. The protein resides in the m line. May link the intermediate filament cytoskeleton to the M-disk of the myofibrils in striated muscle. The protein is Myomesin-3 (MYOM3) of Homo sapiens (Human).